A 133-amino-acid chain; its full sequence is Nodulation protein K (133 aa).

This Bradyrhizobium elkanii protein is Nodulation protein K (nodK).